The sequence spans 176 residues: uncharacterized protein (176 aa).

The signal sequence occupies residues 1-22; the sequence is MKYNNIIFLGLCLGLTTYSALS. Cysteine 38 and cysteine 78 are joined by a disulfide.

It belongs to the fimbrial protein family.

It is found in the fimbrium. This is an uncharacterized protein from Escherichia coli (strain K12).